Reading from the N-terminus, the 131-residue chain is Outer membrane protein assembly factor BamE (131 aa).

An N-terminal signal peptide occupies residues 1 to 16 (MRNLLLVAAVALSTAG). Cysteine 17 carries N-palmitoyl cysteine lipidation. Residue cysteine 17 is the site of S-diacylglycerol cysteine attachment. Residues 112–131 (SAPKQFGRNLARDKKKQRGR) form a disordered region.

It belongs to the BamE family. In terms of assembly, part of the Bam complex.

The protein resides in the cell outer membrane. Its function is as follows. Part of the outer membrane protein assembly complex, which is involved in assembly and insertion of beta-barrel proteins into the outer membrane. The sequence is that of Outer membrane protein assembly factor BamE from Xanthomonas campestris pv. campestris (strain ATCC 33913 / DSM 3586 / NCPPB 528 / LMG 568 / P 25).